The chain runs to 78 residues: Large ribosomal subunit protein bL28 (78 aa).

It belongs to the bacterial ribosomal protein bL28 family.

In Clavibacter michiganensis subsp. michiganensis (strain NCPPB 382), this protein is Large ribosomal subunit protein bL28.